A 292-amino-acid polypeptide reads, in one-letter code: 4-hydroxy-tetrahydrodipicolinate synthase (292 aa).

Threonine 45 provides a ligand contact to pyruvate. Tyrosine 133 functions as the Proton donor/acceptor in the catalytic mechanism. Catalysis depends on lysine 161, which acts as the Schiff-base intermediate with substrate. Isoleucine 203 provides a ligand contact to pyruvate.

This sequence belongs to the DapA family. In terms of assembly, homotetramer; dimer of dimers.

The protein resides in the cytoplasm. The enzyme catalyses L-aspartate 4-semialdehyde + pyruvate = (2S,4S)-4-hydroxy-2,3,4,5-tetrahydrodipicolinate + H2O + H(+). The protein operates within amino-acid biosynthesis; L-lysine biosynthesis via DAP pathway; (S)-tetrahydrodipicolinate from L-aspartate: step 3/4. In terms of biological role, catalyzes the condensation of (S)-aspartate-beta-semialdehyde [(S)-ASA] and pyruvate to 4-hydroxy-tetrahydrodipicolinate (HTPA). The polypeptide is 4-hydroxy-tetrahydrodipicolinate synthase (Nitrosomonas europaea (strain ATCC 19718 / CIP 103999 / KCTC 2705 / NBRC 14298)).